The sequence spans 170 residues: Photosystem I assembly protein Ycf3 (170 aa).

TPR repeat units lie at residues 35–68 (AFTY…EVDA), 72–105 (SYIL…NPSL), and 120–153 (GEQA…APTN).

Belongs to the Ycf3 family.

It is found in the plastid. The protein localises to the chloroplast thylakoid membrane. Essential for the assembly of the photosystem I (PSI) complex. May act as a chaperone-like factor to guide the assembly of the PSI subunits. The protein is Photosystem I assembly protein Ycf3 of Tetradesmus obliquus (Green alga).